The chain runs to 1382 residues: Y' element ATP-dependent helicase protein 1 copy 4 (1382 aa).

The region spanning glutamate 383–alanine 560 is the Helicase ATP-binding domain. Alanine 396 to threonine 403 lines the ATP pocket. Residues lysine 617–glycine 766 form the Helicase C-terminal domain. Disordered regions lie at residues alanine 840–threonine 864 and threonine 880–lysine 1007. A compositionally biased stretch (low complexity) spans threonine 880–serine 983. The span at alanine 984–lysine 1007 shows a compositional bias: basic and acidic residues.

It belongs to the helicase family. Yeast subtelomeric Y' repeat subfamily.

Its function is as follows. Catalyzes DNA unwinding and is involved in telomerase-independent telomere maintenance. This chain is Y' element ATP-dependent helicase protein 1 copy 4 (YRF1-4), found in Saccharomyces cerevisiae (strain ATCC 204508 / S288c) (Baker's yeast).